We begin with the raw amino-acid sequence, 1083 residues long: DNA primase (1083 aa).

Residues 1022 to 1061 (CLRYPHRGGRTAPRTFVSLRVDHHNRLCISLAQQCFATKC) form a CHC2-type zinc finger.

This sequence belongs to the herpesviridae DNA primase family. In terms of assembly, associates with the helicase and the primase-associated factor to form the helicase-primase factor.

Its subcellular location is the host nucleus. Its function is as follows. Essential component of the helicase/primase complex. Unwinds the DNA at the replication forks and generates single-stranded DNA for both leading and lagging strand synthesis. The primase initiates primer synthesis and thereby produces large amount of short RNA primers on the lagging strand that the polymerase elongates using dNTPs. The sequence is that of DNA primase from Varicella-zoster virus (strain Oka vaccine) (HHV-3).